A 283-amino-acid chain; its full sequence is Undecaprenyl-diphosphatase (283 aa).

The next 7 membrane-spanning stretches (helical) occupy residues 1 to 21, 40 to 60, 85 to 105, 117 to 137, 196 to 216, 232 to 252, and 258 to 278; these read MDIIQAIVLGIIQGLTEFLPI, GAAFTAIIQIGTLAAVLIYFY, SRMGWMISAGTIPIVVLGLLF, YIISGSLILLALVLMYAEYLV, FSFLLSLPAVFAAGVYQLLKV, VATVVSGVIGYASIAFLLDYL, and YLFIIYRILLGVFLLAMLSMG.

Belongs to the UppP family.

The protein resides in the cell inner membrane. It catalyses the reaction di-trans,octa-cis-undecaprenyl diphosphate + H2O = di-trans,octa-cis-undecaprenyl phosphate + phosphate + H(+). Catalyzes the dephosphorylation of undecaprenyl diphosphate (UPP). Confers resistance to bacitracin. This chain is Undecaprenyl-diphosphatase, found in Chloroherpeton thalassium (strain ATCC 35110 / GB-78).